The primary structure comprises 43 residues: Protein PsbN (43 aa).

Residues 5–27 traverse the membrane as a helical segment; it reads TLVAIFISGSLVSFTGYALYTAF.

The protein belongs to the PsbN family.

The protein resides in the plastid. Its subcellular location is the chloroplast thylakoid membrane. Functionally, may play a role in photosystem I and II biogenesis. The chain is Protein PsbN from Nelumbo lutea (American lotus).